We begin with the raw amino-acid sequence, 237 residues long: MANSKFGYVRQFETHDVILPQCYIVVRIDGKKFHEFSKFYEFAKPNDENALKLMNACAKNLVLKYKNDIILAFGESDEYSFILKSSTTLFNRRKDKLATLFGSFFTSNYVALWAKFFPEKPLNIKHLPYFDSRCVAYPNLQTIKDYLSWRYVDTHINNLYNTTFWQLIIKCGLTPQESEKKLCGTFSNEKQEILFSECGINYNNEPEMFKKGSLVTRKGEILHINVIAQIDELFEGY.

An N-acetylalanine modification is found at A2. Mg(2+) contacts are provided by D29 and G30. GTP-binding residues include K32, F33, H34, K44, and D47. Mg(2+) is bound at residue D77.

This sequence belongs to the tRNA(His) guanylyltransferase family. As to quaternary structure, homotetramer. The cofactor is Mg(2+).

The catalysed reaction is a 5'-end ribonucleotide-tRNA(His) + GTP + ATP + H2O = a 5'-end phospho-guanosine-ribonucleotide-tRNA(His) + AMP + 2 diphosphate + H(+). It catalyses the reaction a 5'-end ribonucleotide-RNA + a ribonucleoside 5'-triphosphate + ATP + H2O = a 5'-end phospho-ribonucleoside-ribonucleotide-RNA + AMP + 2 diphosphate + H(+). Acts as a tRNA(His) guanylyltransferase that catalyzes 3'-5' addition of a single guanosine residue to the -1 position of tRNA(His), to form a non-Watson-Crick G(-1):A-73 base pair. After addition of G(-1), THG1 removes pyrophosphate from the tRNA 5'-end, generating 5'-monophosphorylated G(-1)-containing tRNA which is important for recognition of tRNA(His) by its cognate histidyl-tRNA synthetase. In addition to the single-G(-1) addition reaction, THG1 polymerizes multiple G residues to the 5'-end of tRNA(His) variants using the 3'-end of the tRNA(His) acceptor stem as a template. In Saccharomyces cerevisiae (strain ATCC 204508 / S288c) (Baker's yeast), this protein is tRNA(His) guanylyltransferase.